The chain runs to 297 residues: Cell division protein FtsQ (297 aa).

The Cytoplasmic portion of the chain corresponds to 1–33; it reads MRPLSFRRRTAQARPDPAPSRLSYRVQRLLLTP. The helical transmembrane segment at 34–54 threads the bilayer; sequence LFHALIRVGLPAFVLAFGVGW. The Periplasmic portion of the chain corresponds to 55–297; sequence LLQNQELRDE…IRGLTNDRIE (243 aa). The POTRA domain maps to 82–150; that stretch reads FMVNAMSVSG…GILAIEIVER (69 aa).

Belongs to the FtsQ/DivIB family. FtsQ subfamily.

It localises to the cell inner membrane. In terms of biological role, essential cell division protein. The sequence is that of Cell division protein FtsQ from Dinoroseobacter shibae (strain DSM 16493 / NCIMB 14021 / DFL 12).